The primary structure comprises 230 residues: Large ribosomal subunit protein uL1 (230 aa).

This sequence belongs to the universal ribosomal protein uL1 family. Part of the 50S ribosomal subunit.

In terms of biological role, binds directly to 23S rRNA. The L1 stalk is quite mobile in the ribosome, and is involved in E site tRNA release. Its function is as follows. Protein L1 is also a translational repressor protein, it controls the translation of the L11 operon by binding to its mRNA. The sequence is that of Large ribosomal subunit protein uL1 from Leptospira interrogans serogroup Icterohaemorrhagiae serovar copenhageni (strain Fiocruz L1-130).